The sequence spans 254 residues: Glucosamine-6-phosphate deaminase (254 aa).

The active-site Proton acceptor; for enolization step is D67. N136 functions as the For ring-opening step in the catalytic mechanism. Catalysis depends on H138, which acts as the Proton acceptor; for ring-opening step. Catalysis depends on E143, which acts as the For ring-opening step.

This sequence belongs to the glucosamine/galactosamine-6-phosphate isomerase family. NagB subfamily.

It catalyses the reaction alpha-D-glucosamine 6-phosphate + H2O = beta-D-fructose 6-phosphate + NH4(+). It functions in the pathway amino-sugar metabolism; N-acetylneuraminate degradation; D-fructose 6-phosphate from N-acetylneuraminate: step 5/5. Functionally, catalyzes the reversible isomerization-deamination of glucosamine 6-phosphate (GlcN6P) to form fructose 6-phosphate (Fru6P) and ammonium ion. The chain is Glucosamine-6-phosphate deaminase from Brevibacillus brevis (strain 47 / JCM 6285 / NBRC 100599).